The primary structure comprises 305 residues: Putative HTH-type transcriptional regulatory protein Saci_1344 (305 aa).

An HTH cro/C1-type domain is found at 128–183 (LREKREEKNMSLGELSQRLGVSRISVYDYEKEDSYVSIEVAEKLIEIFGDEVIGDI). The H-T-H motif DNA-binding region spans 139–158 (LGELSQRLGVSRISVYDYEK).

The protein is Putative HTH-type transcriptional regulatory protein Saci_1344 of Sulfolobus acidocaldarius (strain ATCC 33909 / DSM 639 / JCM 8929 / NBRC 15157 / NCIMB 11770).